The sequence spans 515 residues: Cytochrome P450 monooxygenase nsrP (515 aa).

Residues phenylalanine 20–proline 40 form a helical membrane-spanning segment. Residues asparagine 84, asparagine 406, and asparagine 411 are each glycosylated (N-linked (GlcNAc...) asparagine). A heme-binding site is contributed by cysteine 452.

This sequence belongs to the cytochrome P450 family. The cofactor is heme.

The protein localises to the membrane. It participates in secondary metabolite biosynthesis. Cytochrome P450 monooxygenase; part of the gene cluster that mediates the biosynthesis of the tetrahydroxanthone dimer neosartorin, which exhibits antibacterial activity. The two different monomeric units appear to be synthesized by the same set of enzymes, among which the Baeyer-Villiger monooxygenase nsrF is the key enzyme for the divergence of the biosynthetic routes. The pathway begins with the synthesis of atrochrysone thioester by the polyketide synthase nsrB. The atrochrysone carboxyl ACP thioesterase nsrC then breaks the thioester bond and releases the atrochrysone carboxylic acid from AacuL. Atrochrysone carboxylic acid is decarboxylated by the decarboxylase nsrE, and oxidized by the anthrone oxygenase nsrD to yield emodin. Emodin is then reduced to emodin hydroquinone by the oxidoreductase nsrR. A-ring reduction by the short chain dehydrogenase nsrJ, dehydration by the scytalone dehydratase-like protein nsrI and probable spontaneous re-oxidation, results in overall deoxygenation to chrysophanol. The Baeyer-Villiger monooxygenase nsrF accepts chrysophanol as a substrate to insert one oxygen atom at two different positions to yield the precursors of both monomric units. NsrF is promiscuous/flexible in interacting with the 2 (non methylated and methylated) aromatic rings of chrysophanol, thus diverging the biosynthetic pathway at this point. After the hydrolysis of the lactones, methylesterification by the methyltransferase nsrG yields respectively moniliphenone and 2,2',6'-trihydroxy-4-methyl-6-methoxya-cyldiphenylmethanone. The next steps are the hydroxylation by the FAD-dependent monooxygenase nsrK, followed by isomerization by the monooxygenase nsrQ. The short chain dehydrogenase/reductase nsrO then catalyzes the C-5 ketoreduction to give the xanthone skeleton of blennolide C and 5-acetylblennolide A. The acetyltransferase nsrL has a strict substrate specificity and uses only blennolide A but not blennolide C to yield 5-acetylblennolide A as the single-acetylated product. In the final step of the biosynthesis, the heterodimerization of the 2 xanthones, blennolide C and 5-acetylblennolide A, is catalyzed by the cytochrome P450 monooxygenase nsrP. NsrP can utilize at least three different xanthones as its substrates to perform the dimerization reaction. The chain is Cytochrome P450 monooxygenase nsrP from Aspergillus novofumigatus (strain IBT 16806).